Consider the following 97-residue polypeptide: NADH-quinone oxidoreductase subunit K (97 aa).

Transmembrane regions (helical) follow at residues 1–21, 25–45, and 57–77; these read MSEY…GVLY, ILVM…LMVY, and VFVF…LAIL.

This sequence belongs to the complex I subunit 4L family. As to quaternary structure, NDH-1 is composed of 14 different subunits. Subunits NuoA, H, J, K, L, M, N constitute the membrane sector of the complex.

The protein localises to the cell inner membrane. It carries out the reaction a quinone + NADH + 5 H(+)(in) = a quinol + NAD(+) + 4 H(+)(out). Its function is as follows. NDH-1 shuttles electrons from NADH, via FMN and iron-sulfur (Fe-S) centers, to quinones in the respiratory chain. The immediate electron acceptor for the enzyme in this species is believed to be a menaquinone. Couples the redox reaction to proton translocation (for every two electrons transferred, four hydrogen ions are translocated across the cytoplasmic membrane), and thus conserves the redox energy in a proton gradient. In Cytophaga hutchinsonii (strain ATCC 33406 / DSM 1761 / CIP 103989 / NBRC 15051 / NCIMB 9469 / D465), this protein is NADH-quinone oxidoreductase subunit K.